Reading from the N-terminus, the 350-residue chain is S-adenosylmethionine:tRNA ribosyltransferase-isomerase (350 aa).

Belongs to the QueA family. As to quaternary structure, monomer.

Its subcellular location is the cytoplasm. It carries out the reaction 7-aminomethyl-7-carbaguanosine(34) in tRNA + S-adenosyl-L-methionine = epoxyqueuosine(34) in tRNA + adenine + L-methionine + 2 H(+). The protein operates within tRNA modification; tRNA-queuosine biosynthesis. Functionally, transfers and isomerizes the ribose moiety from AdoMet to the 7-aminomethyl group of 7-deazaguanine (preQ1-tRNA) to give epoxyqueuosine (oQ-tRNA). In Bacillus mycoides (strain KBAB4) (Bacillus weihenstephanensis), this protein is S-adenosylmethionine:tRNA ribosyltransferase-isomerase.